Here is a 613-residue protein sequence, read N- to C-terminus: UvrABC system protein C (613 aa).

The GIY-YIG domain maps to 20-98; sequence ERPGVYLMYD…IKRHKPRYNI (79 aa). In terms of domain architecture, UVR spans 209-244; that stretch reads FDVIESLGHKMQQASDEFEFEKAALYRDKISALRAI.

Belongs to the UvrC family. In terms of assembly, interacts with UvrB in an incision complex.

The protein localises to the cytoplasm. The UvrABC repair system catalyzes the recognition and processing of DNA lesions. UvrC both incises the 5' and 3' sides of the lesion. The N-terminal half is responsible for the 3' incision and the C-terminal half is responsible for the 5' incision. The chain is UvrABC system protein C from Hydrogenovibrio crunogenus (strain DSM 25203 / XCL-2) (Thiomicrospira crunogena).